A 241-amino-acid polypeptide reads, in one-letter code: Accessory protein p30II (241 aa).

Short sequence motifs (nuclear localization signal) lie at residues 73–78 and 91–98; these read RRCRSR and GPRRSRPR. The interval 86–153 is disordered; it reads AFPPGGPRRS…HRNSPTDTKL (68 aa). The segment covering 107 to 138 has biased composition (low complexity); the sequence is PSSTVSSSSLSFNSSSKDNSPSTNSSTSRSSG. Positions 175–184 match the Mitochondrial targeting signal motif; the sequence is LRVWRLCTRR.

The protein belongs to the HTLV-1 accessory protein p30II family. In terms of assembly, p30II binds to the KIX domains of CREBBP and EP300.

The protein localises to the host nucleus. Its subcellular location is the host nucleolus. It is found in the host mitochondrion inner membrane. Its function is as follows. p30II is a multifunctional regulator that sequesters EP300/CREBBP and down-regulates CREB-responsive element (CRE) and Tax-responsive element (TRE) mediated transcription. Specifically binds and represses tax/rex mRNA nuclear export. Since Tax and Rex are positive regulators of viral gene expression, their inhibition by p30II reduces virion production, and allows the virus to escape the host immune surveillance and persist latently in an immune-competent host. P13II increases mitochondrial permeability to monovalent cations, producing a rapid, membrane potential-dependent influx of potassium. This could involve a channel-forming activity. Interferes with cell proliferation and transformation and promotes apoptosis induced by ceramide and Fas ligand, probably using the Ras signaling. This Human T-cell leukemia virus 1 (isolate Caribbea HS-35 subtype A) (HTLV-1) protein is Accessory protein p30II.